Here is a 96-residue protein sequence, read N- to C-terminus: Phosphoribosyl-ATP pyrophosphatase (96 aa).

The protein belongs to the PRA-PH family.

It localises to the cytoplasm. The enzyme catalyses 1-(5-phospho-beta-D-ribosyl)-ATP + H2O = 1-(5-phospho-beta-D-ribosyl)-5'-AMP + diphosphate + H(+). It participates in amino-acid biosynthesis; L-histidine biosynthesis; L-histidine from 5-phospho-alpha-D-ribose 1-diphosphate: step 2/9. The polypeptide is Phosphoribosyl-ATP pyrophosphatase (Methanococcus aeolicus (strain ATCC BAA-1280 / DSM 17508 / OCM 812 / Nankai-3)).